The sequence spans 274 residues: tRNA-cytidine(32) 2-sulfurtransferase (274 aa).

The short motif at 40–45 (SGGKDS) is the PP-loop motif element. The [4Fe-4S] cluster site is built by C115, C118, and C206.

This sequence belongs to the TtcA family. In terms of assembly, homodimer. It depends on Mg(2+) as a cofactor. The cofactor is [4Fe-4S] cluster.

The protein resides in the cytoplasm. The enzyme catalyses cytidine(32) in tRNA + S-sulfanyl-L-cysteinyl-[cysteine desulfurase] + AH2 + ATP = 2-thiocytidine(32) in tRNA + L-cysteinyl-[cysteine desulfurase] + A + AMP + diphosphate + H(+). It functions in the pathway tRNA modification. Its function is as follows. Catalyzes the ATP-dependent 2-thiolation of cytidine in position 32 of tRNA, to form 2-thiocytidine (s(2)C32). The sulfur atoms are provided by the cysteine/cysteine desulfurase (IscS) system. The chain is tRNA-cytidine(32) 2-sulfurtransferase from Pseudomonas fluorescens (strain ATCC BAA-477 / NRRL B-23932 / Pf-5).